We begin with the raw amino-acid sequence, 97 residues long: UPF0250 protein HD_2015 (97 aa).

The protein belongs to the UPF0250 family.

This chain is UPF0250 protein HD_2015, found in Haemophilus ducreyi (strain 35000HP / ATCC 700724).